A 124-amino-acid chain; its full sequence is Large ribosomal subunit protein bL12 (124 aa).

It belongs to the bacterial ribosomal protein bL12 family. In terms of assembly, homodimer. Part of the ribosomal stalk of the 50S ribosomal subunit. Forms a multimeric L10(L12)X complex, where L10 forms an elongated spine to which 2 to 4 L12 dimers bind in a sequential fashion. Binds GTP-bound translation factors.

Functionally, forms part of the ribosomal stalk which helps the ribosome interact with GTP-bound translation factors. Is thus essential for accurate translation. The protein is Large ribosomal subunit protein bL12 of Xanthobacter autotrophicus (strain ATCC BAA-1158 / Py2).